The following is a 162-amino-acid chain: NADH-quinone oxidoreductase subunit I (162 aa).

4Fe-4S ferredoxin-type domains are found at residues 53-83 and 93-122; these read LRRY…IDSE and TRYD…ETRI. Cysteine 63, cysteine 66, cysteine 69, cysteine 73, cysteine 102, cysteine 105, cysteine 108, and cysteine 112 together coordinate [4Fe-4S] cluster.

The protein belongs to the complex I 23 kDa subunit family. As to quaternary structure, NDH-1 is composed of 14 different subunits. Subunits NuoA, H, J, K, L, M, N constitute the membrane sector of the complex. [4Fe-4S] cluster serves as cofactor.

Its subcellular location is the cell inner membrane. The catalysed reaction is a quinone + NADH + 5 H(+)(in) = a quinol + NAD(+) + 4 H(+)(out). NDH-1 shuttles electrons from NADH, via FMN and iron-sulfur (Fe-S) centers, to quinones in the respiratory chain. The immediate electron acceptor for the enzyme in this species is believed to be ubiquinone. Couples the redox reaction to proton translocation (for every two electrons transferred, four hydrogen ions are translocated across the cytoplasmic membrane), and thus conserves the redox energy in a proton gradient. In Thiobacillus denitrificans (strain ATCC 25259 / T1), this protein is NADH-quinone oxidoreductase subunit I.